A 261-amino-acid polypeptide reads, in one-letter code: Complex I assembly factor TIMMDC1, mitochondrial (261 aa).

The next 3 membrane-spanning stretches (helical) occupy residues 67 to 87 (LNSV…YGGV), 131 to 151 (WGWR…CMSV), and 183 to 203 (AGGI…LLLM).

The protein belongs to the Tim17/Tim22/Tim23 family. In terms of assembly, associates with complex I assembly intermediates during its biogenesis in a NdufAF3 and NdufAF4 dependent manner.

Its subcellular location is the membrane. Chaperone protein involved in the assembly of the mitochondrial NADH:ubiquinone oxidoreductase complex (complex I). Essential for viability. This Drosophila melanogaster (Fruit fly) protein is Complex I assembly factor TIMMDC1, mitochondrial.